The following is a 536-amino-acid chain: Pentatricopeptide repeat-containing protein At2g06000 (536 aa).

PPR repeat units lie at residues Ser102 to Pro136, Asn137 to Val167, Cys170 to Phe200, Asp205 to Pro239, Asp240 to Ser274, Asp276 to Pro310, Thr311 to Pro345, Asp346 to Pro380, Asn381 to Pro415, Gln416 to Pro450, Asp451 to Pro485, and Asp486 to Pro523.

This sequence belongs to the PPR family. P subfamily.

The polypeptide is Pentatricopeptide repeat-containing protein At2g06000 (Arabidopsis thaliana (Mouse-ear cress)).